The primary structure comprises 104 residues: Interferon alpha-inducible protein 27-like protein 1 (104 aa).

3 helical membrane passes run 14–34, 59–79, and 81–101; these read VAAV…LSAM, GGGV…AAGL, and VTSK…LGSP.

The protein belongs to the IFI6/IFI27 family.

The protein resides in the membrane. In terms of biological role, plays a role in the apoptotic process and has a pro-apoptotic activity. The polypeptide is Interferon alpha-inducible protein 27-like protein 1 (Homo sapiens (Human)).